The primary structure comprises 222 residues: Superoxide dismutase [Mn], mitochondrial (222 aa).

The transit peptide at 1–24 (MLCRAACSAGRRLGPAASTAGSRH) directs the protein to the mitochondrion. Histidine 50 is a Mn(2+) binding site. Tyrosine 58 is subject to 3'-nitrotyrosine. 2 positions are modified to N6-acetyllysine; alternate: lysine 68 and lysine 75. 2 positions are modified to N6-succinyllysine; alternate: lysine 68 and lysine 75. Histidine 98 lines the Mn(2+) pocket. Lysine 114 carries the post-translational modification N6-acetyllysine. An N6-acetyllysine; alternate mark is found at lysine 122 and lysine 130. Residues lysine 122 and lysine 130 each carry the N6-succinyllysine; alternate modification. Mn(2+) contacts are provided by aspartate 183 and histidine 187. N6-acetyllysine is present on lysine 202.

The protein belongs to the iron/manganese superoxide dismutase family. Homotetramer. Mn(2+) serves as cofactor. In terms of processing, nitrated under oxidative stress. Nitration coupled with oxidation inhibits the catalytic activity. Post-translationally, acetylation at Lys-122 decreases enzymatic activity. Deacetylated by SIRT3 upon exposure to ionizing radiations or after long fasting. Polyubiquitinated; leading to proteasomal degradation. Deubiquitinated by USP36 which increases protein stability.

The protein resides in the mitochondrion matrix. It carries out the reaction 2 superoxide + 2 H(+) = H2O2 + O2. Its function is as follows. Destroys superoxide anion radicals which are normally produced within the cells and which are toxic to biological systems. The sequence is that of Superoxide dismutase [Mn], mitochondrial (Sod2) from Rattus norvegicus (Rat).